Consider the following 154-residue polypeptide: Transcriptional repressor NrdR (154 aa).

A zinc finger lies at 3–34 (CPTCQYNGTRVVDSRPADDGNSIRRRRECEKC). One can recognise an ATP-cone domain in the interval 49–139 (LIVVKKDGAR…VYRQFKDISV (91 aa)).

It belongs to the NrdR family. Zn(2+) is required as a cofactor.

Negatively regulates transcription of bacterial ribonucleotide reductase nrd genes and operons by binding to NrdR-boxes. The protein is Transcriptional repressor NrdR of Listeria monocytogenes serotype 4a (strain HCC23).